The following is a 96-amino-acid chain: Probable quinol oxidase subunit 4 (96 aa).

3 helical membrane passes run 8-28 (TVGF…TLYT), 36-56 (LTII…MFMH), and 68-88 (FKVI…YWVM).

It belongs to the cytochrome c oxidase bacterial subunit 4 family.

The protein localises to the cell membrane. It catalyses the reaction 2 a quinol + O2 = 2 a quinone + 2 H2O. In terms of biological role, catalyzes quinol oxidation with the concomitant reduction of oxygen to water. The sequence is that of Probable quinol oxidase subunit 4 (qoxD) from Staphylococcus aureus (strain USA300).